We begin with the raw amino-acid sequence, 110 residues long: U12-hexatoxin-Hi1a (110 aa).

The signal sequence occupies residues methionine 1 to glycine 18. Cystine bridges form between cysteine 72–cysteine 86, cysteine 79–cysteine 91, and cysteine 85–cysteine 104.

In terms of tissue distribution, expressed by the venom gland.

The protein localises to the secreted. In terms of biological role, probable ion channel inhibitor. In Hadronyche infensa (Fraser island funnel-web spider), this protein is U12-hexatoxin-Hi1a.